Consider the following 642-residue polypeptide: Uromodulin (642 aa).

Residues 1-26 (MGQLSSLTSVWMVVVVTSWVIIAANI) form the signal peptide. In terms of domain architecture, EGF-like 1 spans 32 to 64 (RSCSECHSNATCMEDGMVTTCSCLVGFTGSGFE). Cystine bridges form between cysteine 34–cysteine 43, cysteine 37–cysteine 52, cysteine 54–cysteine 65, cysteine 71–cysteine 85, cysteine 79–cysteine 94, cysteine 96–cysteine 108, cysteine 114–cysteine 128, cysteine 122–cysteine 137, cysteine 139–cysteine 150, cysteine 152–cysteine 163, cysteine 157–cysteine 172, cysteine 176–cysteine 269, cysteine 197–cysteine 284, cysteine 219–cysteine 257, cysteine 225–cysteine 289, cysteine 250–cysteine 258, cysteine 299–cysteine 308, cysteine 302–cysteine 317, cysteine 319–cysteine 348, cysteine 336–cysteine 426, and cysteine 367–cysteine 390. N-linked (GlcNAc...) asparagine glycosylation is present at asparagine 40. Residues 67-109 (DLDECAIPGAHNCSEGSSCMNTLGSYLCTCPDGFRLTPGLGCI) enclose the EGF-like 2; calcium-binding domain. Asparagine 78 is a glycosylation site (N-linked (GlcNAc...) asparagine). In terms of domain architecture, EGF-like 3; calcium-binding spans 110–151 (DVDECSEPGLSRCHALATCINNKGNYSCVCPAGYRGDGQHCE). N-linked (GlcNAc...) asparagine glycosylation is present at asparagine 134. Positions 152-173 (CSPGSCGPGLDCVPVGDALVCA) are beta hairpin. Residues 174–293 (DPCQEHRILD…CYLAYCTDPT (120 aa)) are D10C. Asparagine 234 and asparagine 246 each carry an N-linked (GlcNAc...) asparagine glycan. A glycan (N-linked (GlcNAc...) asparagine) is linked at asparagine 277. One can recognise an EGF-like 4 domain in the interval 294–325 (SVLGTCEECSVEEDCKSHDGMWSCQCKQDFNV). Residue asparagine 324 is glycosylated (N-linked (GlcNAc...) asparagine). Residues 335-430 (ECRPNDIKVS…KINFECSYPL (96 aa)) form a ZP-N region. Positions 335–590 (ECRPNDIKVS…PTCSGTRFRS (256 aa)) constitute a ZP domain. 2 N-linked (GlcNAc...) asparagine glycosylation sites follow: asparagine 397 and asparagine 448. The flexible ZP-N/ZP-C linker; important for secretion and polymerization into filaments stretch occupies residues 431 to 454 (DMKVSLETSLQPIVSSLNISVGGT). An internal hydrophobic patch (IHP) region spans residues 455–465 (GMFTVRMALFQ). The segment at 455–590 (GMFTVRMALF…PTCSGTRFRS (136 aa)) is ZP-C. Cystine bridges form between cysteine 507/cysteine 567, cysteine 528/cysteine 583, and cysteine 572/cysteine 579. Asparagine 514 is a glycosylation site (N-linked (GlcNAc...) asparagine). The tract at residues 587–590 (RFRS) is essential for cleavage by HPN. The tract at residues 599-607 (VLNLGPITR) is external hydrophobic patch (EHP); regulates polymerization into filaments. Serine 620 carries the GPI-anchor amidated serine lipid modification. Residues 621 to 642 (SLGFLKVCLPLLLSATLTLMFQ) constitute a propeptide, removed in mature form.

In terms of assembly, homodimer that then polymerizes into long filaments. The filaments can additionally assemble laterally to form a sheet. The filaments consist of a zigzag-shaped backbone with laterally protruding arms which interact with bacterial adhesin fimH. Two fimH molecules can bind to a single UMOD monomer. In terms of processing, N-glycosylated. Proteolytically cleaved at a conserved C-terminal proteolytic cleavage site to generate the secreted form found in urine. This cleavage is catalyzed by HPN. As to expression, detected in kidney and pancreas.

The protein localises to the apical cell membrane. It localises to the basolateral cell membrane. The protein resides in the cell projection. Its subcellular location is the cilium membrane. It is found in the secreted. Its function is as follows. Functions in biogenesis and organization of the apical membrane of epithelial cells of the thick ascending limb of Henle's loop (TALH), where it promotes formation of complex filamentous gel-like structure that may play a role in the water barrier permeability. May serve as a receptor for binding and endocytosis of cytokines (IL-1, IL-2) and TNF. Facilitates neutrophil migration across renal epithelia. In the urine, may contribute to colloid osmotic pressure, retards passage of positively charged electrolytes, and inhibits formation of liquid containing supersaturated salts and subsequent formation of salt crystals. Protects against urinary tract infections by binding to type 1 fimbriated E.coli. Binds to bacterial adhesin fimH which mediates the stable formation of bacterial aggregates, prevents the binding of E.coli to uroplakins UPK1A and UPK1B which act as urothelial receptors for type I fimbriae, and allows for pathogen clearance through micturation. Also promotes aggregation of other bacteria including K.pneumoniae, P.aeruginosa and S.mitis and so may also protect against other uropathogens. The chain is Uromodulin (UMOD) from Canis lupus familiaris (Dog).